Here is an 84-residue protein sequence, read N- to C-terminus: Envelope small membrane protein (84 aa).

At 1–18 the chain is on the virion surface side; it reads MFMADAYLADTVWYVGQI. The helical transmembrane segment at 19-39 threads the bilayer; the sequence is IFIVAICLLVIIVVVAFLATF. Residues 40 to 80 are Intravirion-facing; sequence KLCIQLCGMCNTLVLSPSIYVFNRGRQFYEFYNDVKPPVLD.

This sequence belongs to the betacoronaviruses E protein family. Homopentamer. Interacts with membrane protein M in the budding compartment of the host cell, which is located between endoplasmic reticulum and the Golgi complex. Interacts with Nucleoprotein.

It is found in the host Golgi apparatus membrane. Plays a central role in virus morphogenesis and assembly. Acts as a viroporin and self-assembles in host membranes forming pentameric protein-lipid pores that allow ion transport. Also plays a role in the induction of apoptosis. This chain is Envelope small membrane protein, found in Porcine hemagglutinating encephalomyelitis virus (strain 67N) (HEV-67N).